A 316-amino-acid polypeptide reads, in one-letter code: Short-chain dehydrogenase/reductase family 16C member 6 (316 aa).

Position 40-64 (40-64) interacts with NAD(+); sequence LITGAASGLGRLLAIKFASLGAILV. Serine 173 is a substrate binding site. The active-site Proton acceptor is the tyrosine 186.

This sequence belongs to the short-chain dehydrogenases/reductases (SDR) family.

The chain is Short-chain dehydrogenase/reductase family 16C member 6 (SDR16C6) from Bos taurus (Bovine).